Here is a 177-residue protein sequence, read N- to C-terminus: Ubiquinol-cytochrome c reductase iron-sulfur subunit (177 aa).

A helical membrane pass occupies residues 18–38 (MVLTASSVAAVGAVCTLWPLV). In terms of domain architecture, Rieske spans 88–175 (ARAVKMSELI…YTFISDKKIR (88 aa)). [2Fe-2S] cluster is bound by residues Cys120, His122, Cys139, and His142. A disulfide bridge links Cys125 with Cys141.

This sequence belongs to the Rieske iron-sulfur protein family. As to quaternary structure, the main subunits of complex b-c1 are: cytochrome b, cytochrome c1 and the Rieske protein. [2Fe-2S] cluster serves as cofactor.

The protein resides in the cell membrane. The enzyme catalyses a quinol + 2 Fe(III)-[cytochrome c](out) = a quinone + 2 Fe(II)-[cytochrome c](out) + 2 H(+)(out). Functionally, component of the ubiquinol-cytochrome c reductase complex (complex III or cytochrome b-c1 complex), which is a respiratory chain that generates an electrochemical potential coupled to ATP synthesis. This is Ubiquinol-cytochrome c reductase iron-sulfur subunit (petA) from Rickettsia felis (strain ATCC VR-1525 / URRWXCal2) (Rickettsia azadi).